The primary structure comprises 175 residues: MAPTVMASSATSVAPFQGLKSTAGLPVSRRSNGASLGSVSNGGRIRCMQVWPIEGIKKFETLSYLPPLSTEGLLKQVDYLIRSKWVPCLEFRKVGFIFREHNVSPGYYDGRYWTMWKLPMFGCPAPTQVIPEVEEVRKEYPDPYCRIIGFDNMRQVQSVSFIASKPPGCEESGKA.

Residues 1–46 constitute a chloroplast transit peptide; it reads MAPTVMASSATSVAPFQGLKSTAGLPVSRRSNGASLGSVSNGGRIR.

This sequence belongs to the RuBisCO small chain family. In terms of assembly, heterohexadecamer of 8 large and 8 small subunits.

It localises to the plastid. Its subcellular location is the chloroplast. Functionally, ruBisCO catalyzes two reactions: the carboxylation of D-ribulose 1,5-bisphosphate, the primary event in carbon dioxide fixation, as well as the oxidative fragmentation of the pentose substrate. Both reactions occur simultaneously and in competition at the same active site. Although the small subunit is not catalytic it is essential for maximal activity. The polypeptide is Ribulose bisphosphate carboxylase small subunit, chloroplastic (Aegilops tauschii (Tausch's goatgrass)).